The following is a 372-amino-acid chain: Glutamate 5-kinase (372 aa).

An ATP-binding site is contributed by K14. The substrate site is built by S55, D142, and N154. Residues 174 to 175 (SD) and 216 to 222 (TGGMETK) contribute to the ATP site. The PUA domain occupies 279–357 (QGSIIVDLGA…WEIADVLGHK (79 aa)).

It belongs to the glutamate 5-kinase family.

Its subcellular location is the cytoplasm. The catalysed reaction is L-glutamate + ATP = L-glutamyl 5-phosphate + ADP. It participates in amino-acid biosynthesis; L-proline biosynthesis; L-glutamate 5-semialdehyde from L-glutamate: step 1/2. Its function is as follows. Catalyzes the transfer of a phosphate group to glutamate to form L-glutamate 5-phosphate. This is Glutamate 5-kinase from Carboxydothermus hydrogenoformans (strain ATCC BAA-161 / DSM 6008 / Z-2901).